The primary structure comprises 73 residues: Putative membrane protein insertion efficiency factor (73 aa).

It belongs to the UPF0161 family.

The protein localises to the cell inner membrane. Functionally, could be involved in insertion of integral membrane proteins into the membrane. This chain is Putative membrane protein insertion efficiency factor, found in Neisseria gonorrhoeae (strain ATCC 700825 / FA 1090).